A 161-amino-acid chain; its full sequence is Lectin-like protein EP153R (161 aa).

Over 1–30 the chain is Cytoplasmic; that stretch reads MFSNKKYIGLIDKYCEKKILDDSSTIKICY. A helical membrane pass occupies residues 31–51; sequence ILIGILIGTNMITLIYNFIFW. The Extracellular segment spans residues 52-161; sequence ENYITCNQKD…HVSLLYICSK (110 aa). Cysteines 66 and 77 form a disulfide. The tract at residues 66–160 is lectin-like; the sequence is CPKDWVGYNN…KHVSLLYICS (95 aa). N-linked (GlcNAc...) asparagine; by host glycosylation is found at N89, N98, N104, N110, N116, N130, and N136. C94 and C159 are joined by a disulfide.

This sequence belongs to the asfivirus lectin-like protein family. In terms of assembly, homodimer.

The protein localises to the host endoplasmic reticulum membrane. In terms of biological role, down-regulates MHC-I expression by impairing the appropriate configuration or presentation into the plasma membrane of the latter. Participates in viral hemadsorption, which may help viral spread. Reduces the transactivating activity of host TP53, thus inhibiting apoptosis. Non-essential for virus growth in swine macrophage cell cultures. The protein is Lectin-like protein EP153R of African swine fever virus (isolate Tick/Malawi/Lil 20-1/1983) (ASFV).